Reading from the N-terminus, the 244-residue chain is 15,16-dihydrobiliverdin:ferredoxin oxidoreductase (244 aa).

It belongs to the HY2 family.

It catalyses the reaction 15,16-dihydrobiliverdin + oxidized 2[4Fe-4S]-[ferredoxin] = biliverdin IXalpha + reduced 2[4Fe-4S]-[ferredoxin] + 2 H(+). Its function is as follows. Catalyzes the two-electron reduction of biliverdin IX-alpha at the C15 methine bridge. In Nostoc punctiforme (strain ATCC 29133 / PCC 73102), this protein is 15,16-dihydrobiliverdin:ferredoxin oxidoreductase (pebA).